Consider the following 163-residue polypeptide: Antimicrobial peptide 2 (163 aa).

The signal sequence occupies residues 1–22 (MLNMKSFALLMLFATLVGVTIA). 2 Chitin-binding type-1 domains span residues 26 to 66 (NGKC…EIEP) and 69 to 107 (AGQC…SCLP). Cystine bridges form between Cys29-Cys42, Cys36-Cys48, and Cys41-Cys55. Positions 58-67 (NTPLSEIEPT) are excised as a propeptide. Intrachain disulfides connect Cys72–Cys83, Cys77–Cys89, Cys82–Cys96, and Cys101–Cys105. A propeptide spanning residues 100–163 (MCQGSCLPDM…QVEPAVTKAP (64 aa)) is cleaved from the precursor.

As to expression, expressed in roots, flowers, stem and leaves.

Its function is as follows. Antimicrobial peptide. The protein is Antimicrobial peptide 2 of Stellaria media (Common chickweed).